Reading from the N-terminus, the 165-residue chain is UPF0303 protein ACP_1015 (165 aa).

Belongs to the UPF0303 family.

The protein is UPF0303 protein ACP_1015 of Acidobacterium capsulatum (strain ATCC 51196 / DSM 11244 / BCRC 80197 / JCM 7670 / NBRC 15755 / NCIMB 13165 / 161).